A 520-amino-acid chain; its full sequence is MNVGSILNDDPPSSGNANGNDDNTKIIKSPTAYHKPSVHERHSITSMLNDTPSDSTPTKKPEPTISPEFRKPSISSLTSPSVAHKPPPLPPSSSSVGSSEHSSARSSPAITKRNSIANIIDAYEEPATKTEKKAELNSPKINQSTPVPKLEEHENDTNKVEKVVDSAPEPKPKKEPQPVFDDQDDDLTKIKKLKQSKKPRRYETPPIWAQRWVPPNRQKEETNVDDGNEAITRLSEKPVFDYTTTRSVDLECSITGMIPPSSITRKIAEWVYANFSNVEEKSKRNVELELKFGKIIDKRSGNRIDLNVVTECIFTDHSSVFFDMQVEEVAWKEITKFLDELEKSFQEGKKGRKFKTLESDNTDSFYQLGRKGEHPKRIRVTKDNLLSPPRLVAIQKERVADLYIHNPGSLFDLRLSMSLEIPVPQGNIESIITKNKPEMVREKKRISYTHPPTITKFDLTRVIGNKTEDKYEVELEAGVMEIFAAIDKIQKGVDNLRLEELIEVFLNNARTLNNRLNKIC.

A disordered region spans residues 1-185 (MNVGSILNDD…PQPVFDDQDD (185 aa)). 2 stretches are compositionally biased toward polar residues: residues 11–21 (PPSSGNANGND) and 44–56 (ITSM…SDST). Positions 92 to 108 (SSSSVGSSEHSSARSSP) are enriched in low complexity. Basic and acidic residues-rich tracts occupy residues 126 to 135 (PATKTEKKAE) and 149 to 176 (KLEE…KKEP).

The protein belongs to the fungal TPase family. As to quaternary structure, heterodimer. The mRNA-capping enzyme is composed of two separate chains alpha and beta, respectively a mRNA guanylyltransferase and an mRNA 5'-triphosphate monophosphatase. Mg(2+) serves as cofactor.

The protein resides in the nucleus. It catalyses the reaction a 5'-end triphospho-ribonucleoside in mRNA + H2O = a 5'-end diphospho-ribonucleoside in mRNA + phosphate + H(+). Its function is as follows. First step of mRNA capping. Converts the 5'-triphosphate end of a nascent mRNA chain into a diphosphate end. This is mRNA-capping enzyme subunit beta (CET1) from Candida albicans (strain SC5314 / ATCC MYA-2876) (Yeast).